An 89-amino-acid polypeptide reads, in one-letter code: UPF0367 protein P9515_01381 (89 aa).

This sequence belongs to the UPF0367 family.

This is UPF0367 protein P9515_01381 from Prochlorococcus marinus (strain MIT 9515).